The primary structure comprises 440 residues: Sorting nexin-31 (440 aa).

A PX domain is found at 1-109; sequence MKMHFCIPVS…EFLKLAQLNT (109 aa).

It belongs to the sorting nexin family. Interacts with CCDC22, CCDC93, VPS26C and VPS35L, associates with the retriever and CCC complexes.

Its function is as follows. May be involved in protein trafficking. This Homo sapiens (Human) protein is Sorting nexin-31 (SNX31).